We begin with the raw amino-acid sequence, 80 residues long: MTGTGTTGFEEQLARLQEIVRRLETGELPLEEGVALYKEGLELAAGCRKRLQTARNDIKVFSDGVLKDFDMPEDSPAADD.

This sequence belongs to the XseB family. As to quaternary structure, heterooligomer composed of large and small subunits.

Its subcellular location is the cytoplasm. The enzyme catalyses Exonucleolytic cleavage in either 5'- to 3'- or 3'- to 5'-direction to yield nucleoside 5'-phosphates.. Functionally, bidirectionally degrades single-stranded DNA into large acid-insoluble oligonucleotides, which are then degraded further into small acid-soluble oligonucleotides. The polypeptide is Exodeoxyribonuclease 7 small subunit (Oleidesulfovibrio alaskensis (strain ATCC BAA-1058 / DSM 17464 / G20) (Desulfovibrio alaskensis)).